Here is a 580-residue protein sequence, read N- to C-terminus: D-erythrulose kinase (580 aa).

One can recognise a DhaK domain in the interval 7 to 327; sequence DPARFTEDML…WAAPADTPAY (321 aa). The active-site Tele-hemiaminal-histidine intermediate is the His217. Residues 329–360 are disordered; that stretch reads KGAAQQHVSGERRSEATARSASSGPKLAELSD. The DhaL domain maps to 368–570; that stretch reads RLVARAFDAM…LALCARTVAD (203 aa). ATP is bound by residues 397 to 403, 443 to 444, Gly485, Arg542, and 555 to 557; these read DGDHGRG, TS, and DAG.

The enzyme catalyses D-erythrulose + ATP = D-erythrulose 4-phosphate + ADP + H(+). Its pathway is carbohydrate metabolism; erythritol degradation. It participates in carbohydrate metabolism; D-threitol degradation. Functionally, catalyzes the phosphorylation of D-erythrulose to D-erythrulose-4P. Involved in the degradation pathways of erythritol and D-threitol, that allow M.smegmatis to grow on these compounds as the sole carbon source. The protein is D-erythrulose kinase of Mycolicibacterium smegmatis (strain ATCC 700084 / mc(2)155) (Mycobacterium smegmatis).